The sequence spans 936 residues: Phosphoenolpyruvate carboxylase (936 aa).

Active-site residues include His-155 and Lys-595.

This sequence belongs to the PEPCase type 1 family. In terms of assembly, homotetramer. Mg(2+) is required as a cofactor. The cofactor is Mn(2+).

It carries out the reaction oxaloacetate + phosphate = phosphoenolpyruvate + hydrogencarbonate. With respect to regulation, exhibits positive allosteric property with acetyl-CoA and fructose 1,6-bisphosphate, and a negative one with L-aspartate and L-malate. Functionally, forms oxaloacetate, a four-carbon dicarboxylic acid source for the tricarboxylic acid cycle. The sequence is that of Phosphoenolpyruvate carboxylase (ppc) from Rhodothermus marinus (Rhodothermus obamensis).